A 351-amino-acid polypeptide reads, in one-letter code: Uroporphyrinogen decarboxylase (351 aa).

Substrate is bound by residues 32 to 36 (RQAGR), Phe-51, Asp-82, Tyr-157, Ser-211, and His-326.

Belongs to the uroporphyrinogen decarboxylase family. In terms of assembly, homodimer.

Its subcellular location is the cytoplasm. The catalysed reaction is uroporphyrinogen III + 4 H(+) = coproporphyrinogen III + 4 CO2. It functions in the pathway porphyrin-containing compound metabolism; protoporphyrin-IX biosynthesis; coproporphyrinogen-III from 5-aminolevulinate: step 4/4. Catalyzes the decarboxylation of four acetate groups of uroporphyrinogen III to yield coproporphyrinogen III. In Caulobacter vibrioides (strain ATCC 19089 / CIP 103742 / CB 15) (Caulobacter crescentus), this protein is Uroporphyrinogen decarboxylase.